The following is a 153-amino-acid chain: Succinate dehydrogenase assembly factor 2, mitochondrial (153 aa).

The protein belongs to the SDHAF2 family. In terms of assembly, interacts with the flavoprotein subunit within the SDH catalytic dimer.

Its subcellular location is the mitochondrion matrix. Functionally, plays an essential role in the assembly of succinate dehydrogenase (SDH), an enzyme complex (also referred to as respiratory complex II) that is a component of both the tricarboxylic acid (TCA) cycle and the mitochondrial electron transport chain, and which couples the oxidation of succinate to fumarate with the reduction of ubiquinone (coenzyme Q) to ubiquinol. Required for flavinylation (covalent attachment of FAD) of the flavoprotein subunit of the SDH catalytic dimer. The polypeptide is Succinate dehydrogenase assembly factor 2, mitochondrial (Candida glabrata (strain ATCC 2001 / BCRC 20586 / JCM 3761 / NBRC 0622 / NRRL Y-65 / CBS 138) (Yeast)).